An 83-amino-acid chain; its full sequence is NAD(P)H-quinone oxidoreductase subunit L (83 aa).

2 consecutive transmembrane segments (helical) span residues Leu15–Leu35 and Leu53–Leu73.

The protein belongs to the complex I NdhL subunit family. NDH-1 can be composed of about 15 different subunits; different subcomplexes with different compositions have been identified which probably have different functions.

It is found in the cellular thylakoid membrane. The catalysed reaction is a plastoquinone + NADH + (n+1) H(+)(in) = a plastoquinol + NAD(+) + n H(+)(out). The enzyme catalyses a plastoquinone + NADPH + (n+1) H(+)(in) = a plastoquinol + NADP(+) + n H(+)(out). In terms of biological role, NDH-1 shuttles electrons from an unknown electron donor, via FMN and iron-sulfur (Fe-S) centers, to quinones in the respiratory and/or the photosynthetic chain. The immediate electron acceptor for the enzyme in this species is believed to be plastoquinone. Couples the redox reaction to proton translocation, and thus conserves the redox energy in a proton gradient. Cyanobacterial NDH-1 also plays a role in inorganic carbon-concentration. The polypeptide is NAD(P)H-quinone oxidoreductase subunit L (Prochlorococcus marinus (strain MIT 9303)).